The chain runs to 195 residues: ATP-dependent Clp protease proteolytic subunit (195 aa).

The Nucleophile role is filled by Ser-99. His-124 is an active-site residue.

The protein belongs to the peptidase S14 family. Fourteen ClpP subunits assemble into 2 heptameric rings which stack back to back to give a disk-like structure with a central cavity, resembling the structure of eukaryotic proteasomes.

It localises to the cytoplasm. It carries out the reaction Hydrolysis of proteins to small peptides in the presence of ATP and magnesium. alpha-casein is the usual test substrate. In the absence of ATP, only oligopeptides shorter than five residues are hydrolyzed (such as succinyl-Leu-Tyr-|-NHMec, and Leu-Tyr-Leu-|-Tyr-Trp, in which cleavage of the -Tyr-|-Leu- and -Tyr-|-Trp bonds also occurs).. Its function is as follows. Cleaves peptides in various proteins in a process that requires ATP hydrolysis. Has a chymotrypsin-like activity. Plays a major role in the degradation of misfolded proteins. In Coxiella burnetii (strain CbuG_Q212) (Coxiella burnetii (strain Q212)), this protein is ATP-dependent Clp protease proteolytic subunit.